Here is a 683-residue protein sequence, read N- to C-terminus: Transforming growth factor-beta-induced protein ig-h3 (683 aa).

The signal sequence occupies residues M1–A23. S37 carries the phosphoserine modification. One can recognise an EMI domain in the interval G45–A99. Cystine bridges form between C49–C85, C74–C339, C84–C97, C214–C317, and C473–C478. Residue C65 is modified to S-cysteinyl cysteine. 4 consecutive FAS1 domains span residues L103–I236, T240–L371, S375–L498, and S502–L632. A Cell attachment site motif is present at residues R642–D644.

In terms of assembly, binds to type I, II, and IV collagens. In terms of processing, gamma-carboxylation is controversial. Gamma-carboxyglutamated; gamma-carboxyglutamate residues are formed by vitamin K dependent carboxylation; this may be required for calcium binding. According to a more recent report, does not contain vitamin K-dependent gamma-carboxyglutamate residues. Post-translationally, the EMI domain contains 2 expected intradomain disulfide bridges (Cys-49-Cys85 and Cys-84-Cys-97) and one unusual interdomain disulfide bridge to the second FAS1 domain (Cys-74-Cys-339). This arrangement violates the predicted disulfide bridge pattern of an EMI domain. In terms of tissue distribution, located primarily in the epithelium of normal adult cornea, in fetal stromal cells, and both endothelium- and stroma-derived cells in healing corneal wounds. Not expressed in normal adult endothelium and stroma.

Its subcellular location is the secreted. The protein localises to the extracellular space. It localises to the extracellular matrix. Plays a role in cell adhesion. May play a role in cell-collagen interactions. The chain is Transforming growth factor-beta-induced protein ig-h3 (TGFBI) from Oryctolagus cuniculus (Rabbit).